A 157-amino-acid polypeptide reads, in one-letter code: MARKPDPGRRIVADNRKARFNYEITDTVEAGIALTGTEVKSLRGGKATIGEAYAGPSGDEFFLFNAYIPEYLEANRFNHETKRPRRLLLHRRQINKFLGATQREGYTVIPLKIYFNERGRAKVELGLGRGKKLHDKRETAKERDWQRDRARLLRDKG.

The protein belongs to the SmpB family.

Its subcellular location is the cytoplasm. Functionally, required for rescue of stalled ribosomes mediated by trans-translation. Binds to transfer-messenger RNA (tmRNA), required for stable association of tmRNA with ribosomes. tmRNA and SmpB together mimic tRNA shape, replacing the anticodon stem-loop with SmpB. tmRNA is encoded by the ssrA gene; the 2 termini fold to resemble tRNA(Ala) and it encodes a 'tag peptide', a short internal open reading frame. During trans-translation Ala-aminoacylated tmRNA acts like a tRNA, entering the A-site of stalled ribosomes, displacing the stalled mRNA. The ribosome then switches to translate the ORF on the tmRNA; the nascent peptide is terminated with the 'tag peptide' encoded by the tmRNA and targeted for degradation. The ribosome is freed to recommence translation, which seems to be the essential function of trans-translation. This chain is SsrA-binding protein, found in Methylobacterium nodulans (strain LMG 21967 / CNCM I-2342 / ORS 2060).